The chain runs to 238 residues: Ribitol-5-phosphate cytidylyltransferase 2 (238 aa).

CTP is bound by residues 7–10 (LAGG) and 81–87 (GTDRNET).

This sequence belongs to the IspD/TarI cytidylyltransferase family. TarI subfamily.

It catalyses the reaction D-ribitol 5-phosphate + CTP + H(+) = CDP-L-ribitol + diphosphate. It participates in cell wall biogenesis; poly(ribitol phosphate) teichoic acid biosynthesis. Its function is as follows. Catalyzes the transfer of the cytidylyl group of CTP to D-ribitol 5-phosphate. This Staphylococcus aureus (strain MRSA252) protein is Ribitol-5-phosphate cytidylyltransferase 2.